The sequence spans 235 residues: Phosphoribosylaminoimidazole-succinocarboxamide synthase (235 aa).

Belongs to the SAICAR synthetase family.

It carries out the reaction 5-amino-1-(5-phospho-D-ribosyl)imidazole-4-carboxylate + L-aspartate + ATP = (2S)-2-[5-amino-1-(5-phospho-beta-D-ribosyl)imidazole-4-carboxamido]succinate + ADP + phosphate + 2 H(+). Its pathway is purine metabolism; IMP biosynthesis via de novo pathway; 5-amino-1-(5-phospho-D-ribosyl)imidazole-4-carboxamide from 5-amino-1-(5-phospho-D-ribosyl)imidazole-4-carboxylate: step 1/2. In Streptococcus thermophilus (strain ATCC BAA-491 / LMD-9), this protein is Phosphoribosylaminoimidazole-succinocarboxamide synthase.